The primary structure comprises 419 residues: Ribosomal RNA large subunit methyltransferase G (419 aa).

Over residues 386 to 408 (KAEPFETHPTEAEAKVEVTESKP) the composition is skewed to basic and acidic residues. The segment at 386–419 (KAEPFETHPTEAEAKVEVTESKPHPQSSLYGTKK) is disordered. The segment covering 409–419 (HPQSSLYGTKK) has biased composition (polar residues).

The protein belongs to the methyltransferase superfamily. RlmG family.

The protein localises to the cytoplasm. It catalyses the reaction guanosine(1835) in 23S rRNA + S-adenosyl-L-methionine = N(2)-methylguanosine(1835) in 23S rRNA + S-adenosyl-L-homocysteine + H(+). Functionally, specifically methylates the guanine in position 1835 (m2G1835) of 23S rRNA. This Shewanella woodyi (strain ATCC 51908 / MS32) protein is Ribosomal RNA large subunit methyltransferase G.